We begin with the raw amino-acid sequence, 143 residues long: Small ribosomal subunit protein uS12 (143 aa).

Pro-62 carries the hydroxyproline modification.

The protein belongs to the universal ribosomal protein uS12 family. As to quaternary structure, component of the 40S small ribosomal subunit.

Its subcellular location is the cytoplasm. The protein localises to the cytosol. It localises to the rough endoplasmic reticulum. The sequence is that of Small ribosomal subunit protein uS12 (RPS23) from Ciona intestinalis (Transparent sea squirt).